Here is a 342-residue protein sequence, read N- to C-terminus: Holliday junction branch migration complex subunit RuvB (342 aa).

Residues 1-179 (MTNILSPEKS…FGIPMRLNFY (179 aa)) are large ATPase domain (RuvB-L). Residues I18, R19, G60, K63, T64, T65, 126–128 (EDF), R169, Y179, and R216 each bind ATP. T64 is a Mg(2+) binding site. The small ATPAse domain (RuvB-S) stretch occupies residues 180–250 (NTEELKKVLN…ISDFGLKRLE (71 aa)). Positions 253 to 342 (RIGLDSNDYR…HQFNIFNENE (90 aa)) are head domain (RuvB-H). The DNA site is built by R289, R308, and R313.

Belongs to the RuvB family. In terms of assembly, homohexamer. Forms an RuvA(8)-RuvB(12)-Holliday junction (HJ) complex. HJ DNA is sandwiched between 2 RuvA tetramers; dsDNA enters through RuvA and exits via RuvB. An RuvB hexamer assembles on each DNA strand where it exits the tetramer. Each RuvB hexamer is contacted by two RuvA subunits (via domain III) on 2 adjacent RuvB subunits; this complex drives branch migration. In the full resolvosome a probable DNA-RuvA(4)-RuvB(12)-RuvC(2) complex forms which resolves the HJ.

It is found in the cytoplasm. It carries out the reaction ATP + H2O = ADP + phosphate + H(+). The RuvA-RuvB-RuvC complex processes Holliday junction (HJ) DNA during genetic recombination and DNA repair, while the RuvA-RuvB complex plays an important role in the rescue of blocked DNA replication forks via replication fork reversal (RFR). RuvA specifically binds to HJ cruciform DNA, conferring on it an open structure. The RuvB hexamer acts as an ATP-dependent pump, pulling dsDNA into and through the RuvAB complex. RuvB forms 2 homohexamers on either side of HJ DNA bound by 1 or 2 RuvA tetramers; 4 subunits per hexamer contact DNA at a time. Coordinated motions by a converter formed by DNA-disengaged RuvB subunits stimulates ATP hydrolysis and nucleotide exchange. Immobilization of the converter enables RuvB to convert the ATP-contained energy into a lever motion, pulling 2 nucleotides of DNA out of the RuvA tetramer per ATP hydrolyzed, thus driving DNA branch migration. The RuvB motors rotate together with the DNA substrate, which together with the progressing nucleotide cycle form the mechanistic basis for DNA recombination by continuous HJ branch migration. Branch migration allows RuvC to scan DNA until it finds its consensus sequence, where it cleaves and resolves cruciform DNA. The sequence is that of Holliday junction branch migration complex subunit RuvB from Rickettsia peacockii (strain Rustic).